A 572-amino-acid polypeptide reads, in one-letter code: Dihydroxy-acid dehydratase (572 aa).

Asp78 is a binding site for Mg(2+). Cys119 contributes to the [2Fe-2S] cluster binding site. 2 residues coordinate Mg(2+): Asp120 and Lys121. Lys121 carries the post-translational modification N6-carboxylysine. [2Fe-2S] cluster is bound at residue Cys192. Glu459 is a Mg(2+) binding site. Ser485 acts as the Proton acceptor in catalysis.

The protein belongs to the IlvD/Edd family. Homodimer. It depends on [2Fe-2S] cluster as a cofactor. Mg(2+) is required as a cofactor.

It carries out the reaction (2R)-2,3-dihydroxy-3-methylbutanoate = 3-methyl-2-oxobutanoate + H2O. It catalyses the reaction (2R,3R)-2,3-dihydroxy-3-methylpentanoate = (S)-3-methyl-2-oxopentanoate + H2O. It functions in the pathway amino-acid biosynthesis; L-isoleucine biosynthesis; L-isoleucine from 2-oxobutanoate: step 3/4. It participates in amino-acid biosynthesis; L-valine biosynthesis; L-valine from pyruvate: step 3/4. In terms of biological role, functions in the biosynthesis of branched-chain amino acids. Catalyzes the dehydration of (2R,3R)-2,3-dihydroxy-3-methylpentanoate (2,3-dihydroxy-3-methylvalerate) into 2-oxo-3-methylpentanoate (2-oxo-3-methylvalerate) and of (2R)-2,3-dihydroxy-3-methylbutanoate (2,3-dihydroxyisovalerate) into 2-oxo-3-methylbutanoate (2-oxoisovalerate), the penultimate precursor to L-isoleucine and L-valine, respectively. The sequence is that of Dihydroxy-acid dehydratase from Helicobacter hepaticus (strain ATCC 51449 / 3B1).